The primary structure comprises 385 residues: ATP synthase subunit a-1 (385 aa).

A propeptide spanning residues 1-133 (MRRIFLFDEN…ALNIVGQAAA (133 aa)) is cleaved from the precursor. 7 helical membrane passes run 154–174 (FSFTNSSLFMLLTLSFFLLLI), 220–240 (FFPCILVTFLFLLFCNLQGMI), 249–269 (HFLITLALSFSIFIGITIVGF), 276–296 (FFSFLLPAGVPLPLAPFLVLL), 316–336 (MMAGHSLVKILSGFAWTMLCM), 339–359 (IFYFIGALGPLFIVLALTGLE), and 362–382 (VAILQAYVFTILICIYLNDAI).

Belongs to the ATPase A chain family. In terms of assembly, F-type ATPases have 2 components, CF(1) - the catalytic core - and CF(0) - the membrane proton channel. CF(1) has five subunits: alpha(3), beta(3), gamma(1), delta(1), epsilon(1). CF(0) has three main subunits: a, b and c.

It is found in the mitochondrion inner membrane. Mitochondrial membrane ATP synthase (F(1)F(0) ATP synthase or Complex V) produces ATP from ADP in the presence of a proton gradient across the membrane which is generated by electron transport complexes of the respiratory chain. F-type ATPases consist of two structural domains, F(1) - containing the extramembraneous catalytic core and F(0) - containing the membrane proton channel, linked together by a central stalk and a peripheral stalk. During catalysis, ATP synthesis in the catalytic domain of F(1) is coupled via a rotary mechanism of the central stalk subunits to proton translocation. Key component of the proton channel; it may play a direct role in the translocation of protons across the membrane. The chain is ATP synthase subunit a-1 (ATP6-1) from Arabidopsis thaliana (Mouse-ear cress).